The primary structure comprises 388 residues: tRNA (guanine-N(7)-)-methyltransferase (388 aa).

S-adenosyl-L-methionine is bound by residues glutamate 129, glutamate 154, and aspartate 181. Substrate-binding residues include lysine 207 and aspartate 237.

It belongs to the class I-like SAM-binding methyltransferase superfamily. TrmB family.

It carries out the reaction guanosine(46) in tRNA + S-adenosyl-L-methionine = N(7)-methylguanosine(46) in tRNA + S-adenosyl-L-homocysteine. The protein operates within tRNA modification; N(7)-methylguanine-tRNA biosynthesis. Functionally, catalyzes the formation of N(7)-methylguanine at position 46 (m7G46) in tRNA. This chain is tRNA (guanine-N(7)-)-methyltransferase, found in Wolinella succinogenes (strain ATCC 29543 / DSM 1740 / CCUG 13145 / JCM 31913 / LMG 7466 / NCTC 11488 / FDC 602W) (Vibrio succinogenes).